The chain runs to 84 residues: MPDAFAAADQTLDARGLRCPEPVMMVRKAVRHMADGQTLLIISDDPATTRDIPGFCQFMEHTLLAQATEQLPYRYLLRKGRAAA.

Residue cysteine 19 is the Cysteine persulfide intermediate of the active site.

Belongs to the sulfur carrier protein TusA family. Interacts with IscS.

The protein resides in the cytoplasm. It participates in tRNA modification. Its function is as follows. Sulfur carrier protein involved in sulfur trafficking in the cell. Part of a sulfur-relay system required for 2-thiolation during synthesis of 2-thiouridine of the modified wobble base 5-methylaminomethyl-2-thiouridine (mnm(5)s(2)U) in tRNA. Interacts with IscS and stimulates its cysteine desulfurase activity. Accepts an activated sulfur from IscS, which is then transferred to TusD, and thus determines the direction of sulfur flow from IscS to 2-thiouridine formation. Also appears to be involved in sulfur transfer for the biosynthesis of molybdopterin. In Sodalis glossinidius (strain morsitans), this protein is Sulfur carrier protein TusA.